The chain runs to 424 residues: Adenylosuccinate synthetase (424 aa).

GTP-binding positions include 12-18 (GDEGKGK) and 40-42 (GHT). The active-site Proton acceptor is the D13. Mg(2+) contacts are provided by D13 and G40. Residues 13–16 (DEGK), 38–41 (NAGH), T130, R144, N220, T235, and R299 each bind IMP. The active-site Proton donor is H41. 295-301 (VTTGRRR) provides a ligand contact to substrate. Residues R301, 327-329 (KLD), and 412-414 (GTG) contribute to the GTP site.

Belongs to the adenylosuccinate synthetase family. As to quaternary structure, homodimer. Mg(2+) is required as a cofactor.

It localises to the cytoplasm. The enzyme catalyses IMP + L-aspartate + GTP = N(6)-(1,2-dicarboxyethyl)-AMP + GDP + phosphate + 2 H(+). It functions in the pathway purine metabolism; AMP biosynthesis via de novo pathway; AMP from IMP: step 1/2. Its function is as follows. Plays an important role in the de novo pathway and in the salvage pathway of purine nucleotide biosynthesis. Catalyzes the first committed step in the biosynthesis of AMP from IMP. This chain is Adenylosuccinate synthetase, found in Aspergillus flavus (strain ATCC 200026 / FGSC A1120 / IAM 13836 / NRRL 3357 / JCM 12722 / SRRC 167).